Here is a 583-residue protein sequence, read N- to C-terminus: uncharacterized protein (583 aa).

Residues 1 to 38 show a composition bias toward polar residues; that stretch reads MGQGESIPSRQIQRDASMQAVSSESENINDSDRQNSGF. 4 disordered regions span residues 1–39, 53–124, 156–197, and 362–452; these read MGQG…SGFS, GLRR…AIPQ, TQNN…TAIG, and NSGS…QTDH. Residues 70–80 are compositionally biased toward basic and acidic residues; sequence GNRDRTTERSA. A compositionally biased stretch (low complexity) spans 88–102; the sequence is SLLNRNSPSLRSLSP. 4 stretches are compositionally biased toward polar residues: residues 156-165, 172-191, 384-408, and 420-452; these read TQNNQSTLAS, VSSS…NLES, LISS…NENV, and ASTA…QTDH. The segment at 525 to 568 adopts an RING-type zinc-finger fold; that stretch reads CLVCLSNFELNDECRRLKQCNHFFHRECIDQWLTSSQNSCPLCR. Residue Ser-580 is modified to Phosphoserine.

It is found in the membrane. This is an uncharacterized protein from Schizosaccharomyces pombe (strain 972 / ATCC 24843) (Fission yeast).